Here is a 192-residue protein sequence, read N- to C-terminus: 3-hydroxyanthranilate 3,4-dioxygenase 1 (192 aa).

Arginine 50 serves as a coordination point for O2. Fe cation-binding residues include histidine 54, glutamate 60, and histidine 102. Glutamate 60 contacts substrate. Arginine 106 and glutamate 116 together coordinate substrate. 4 residues coordinate a divalent metal cation: cysteine 131, cysteine 134, cysteine 168, and cysteine 171.

Belongs to the 3-HAO family. Requires Fe(2+) as cofactor.

The protein resides in the cytoplasm. The enzyme catalyses 3-hydroxyanthranilate + O2 = (2Z,4Z)-2-amino-3-carboxymuconate 6-semialdehyde. It functions in the pathway cofactor biosynthesis; NAD(+) biosynthesis; quinolinate from L-kynurenine: step 3/3. Its function is as follows. Catalyzes the oxidative ring opening of 3-hydroxyanthranilate to 2-amino-3-carboxymuconate semialdehyde, which spontaneously cyclizes to quinolinate. The polypeptide is 3-hydroxyanthranilate 3,4-dioxygenase 1 (bna1-1) (Aspergillus oryzae (strain ATCC 42149 / RIB 40) (Yellow koji mold)).